A 442-amino-acid chain; its full sequence is Protoheme IX farnesyltransferase (442 aa).

The tract at residues 1 to 167 is unknown; it reads MGVYSLLVLG…AYVQLMKPRL (167 aa). A run of 11 helical transmembrane segments spans residues 49-69, 76-96, 106-126, 167-187, 194-214, 245-265, 267-287, 308-328, 365-385, 386-406, and 421-441; these read AAAL…RTGA, AVTL…YTAM, VHLT…AWTL, LMWL…SQLG, AATV…SGTF, LAFG…VNLL, AVLG…VLKP, WVAV…VIFL, HIVY…ELTG, LGPL…YFAI, and FHAS…DTMV. The interval 168–439 is prenyltransferase; the sequence is MWLLCLVAGA…CLLVAVVLDT (272 aa).

It in the C-terminal section; belongs to the UbiA prenyltransferase family. Protoheme IX farnesyltransferase subfamily.

The protein resides in the cell membrane. It catalyses the reaction heme b + (2E,6E)-farnesyl diphosphate + H2O = Fe(II)-heme o + diphosphate. It participates in porphyrin-containing compound metabolism; heme O biosynthesis; heme O from protoheme: step 1/1. Its function is as follows. Converts heme B (protoheme IX) to heme O by substitution of the vinyl group on carbon 2 of heme B porphyrin ring with a hydroxyethyl farnesyl side group. The protein is Protoheme IX farnesyltransferase (ctaB) of Halobacterium salinarum (strain ATCC 700922 / JCM 11081 / NRC-1) (Halobacterium halobium).